The chain runs to 161 residues: Arachidonate 5-lipoxygenase-activating protein (161 aa).

Residues methionine 1 to asparagine 8 are Lumenal-facing. A helical transmembrane segment spans residues valine 9–valine 30. The Cytoplasmic portion of the chain corresponds to glutamate 31–arginine 52. A helical transmembrane segment spans residues valine 53–leucine 77. Residues cysteine 78–glutamine 80 lie on the Lumenal side of the membrane. A helical membrane pass occupies residues valine 81–leucine 102. Residues glycine 103–glutamine 107 are Cytoplasmic-facing. An intramembrane segment occupies serine 108–glycine 115. Residues lysine 116–alanine 128 form a helical membrane-spanning segment. Topologically, residues glycine 129–proline 161 are lumenal.

The protein belongs to the MAPEG family. Homotrimer. Interacts with LTC4S and ALOX5.

The protein localises to the nucleus membrane. The protein resides in the endoplasmic reticulum membrane. Its function is as follows. Required for leukotriene biosynthesis by ALOX5 (5-lipoxygenase). Anchors ALOX5 to the membrane. Binds arachidonic acid, and could play an essential role in the transfer of arachidonic acid to ALOX5. Binds to MK-886, a compound that blocks the biosynthesis of leukotrienes. This is Arachidonate 5-lipoxygenase-activating protein (Alox5ap) from Rattus norvegicus (Rat).